A 364-amino-acid polypeptide reads, in one-letter code: E3 ubiquitin-protein ligase rnf146 (364 aa).

A disordered region spans residues 18 to 37 (KKVSGEAVPEGSGSPSSPSL). Low complexity predominate over residues 22–34 (GEAVPEGSGSPSS). The RING-type zinc finger occupies 42-80 (CPICLQSCVHPVRLPCRHIFCFLCVKGASWHSKRCALCR). The WWE domain occupies 102-178 (SATGGCGTGS…EHGRRRRMKR (77 aa)). Positions 118, 121, 125, 155, 164, 174, and 186 each coordinate a glycoprotein. Disordered stretches follow at residues 217 to 262 (AAAE…PASS) and 279 to 364 (NEQE…VTKV). Composition is skewed to acidic residues over residues 281 to 295 (QEPE…DDSA) and 308 to 322 (TSDD…DENE).

Its subcellular location is the cytoplasm. It is found in the cytosol. The protein localises to the nucleus. The catalysed reaction is S-ubiquitinyl-[E2 ubiquitin-conjugating enzyme]-L-cysteine + [acceptor protein]-L-lysine = [E2 ubiquitin-conjugating enzyme]-L-cysteine + N(6)-ubiquitinyl-[acceptor protein]-L-lysine.. It participates in protein modification; protein ubiquitination. Its function is as follows. E3 ubiquitin-protein ligase that specifically binds poly-ADP-ribosylated proteins and mediates their ubiquitination and subsequent degradation. May regulate many important biological processes, such as cell survival and DNA damage response. Acts as an activator of the Wnt signaling pathway by mediating the ubiquitination of poly-ADP-ribosylated proteins. Neuroprotective protein. Protects against cell death induced by DNA damaging agents and rescues cells from G1 arrest. Promotes cell survival after gamma-irradiation. Facilitates DNA repair. This Danio rerio (Zebrafish) protein is E3 ubiquitin-protein ligase rnf146 (rnf146).